The chain runs to 225 residues: Uridylate kinase (225 aa).

Position 9 to 10 (9 to 10) interacts with ATP; the sequence is GS. UMP is bound at residue Gly46. The ATP site is built by Gly47 and Arg51. UMP-binding positions include Asp67 and 115-121; that span reads THPAHTT. Thr141, Asn142, Tyr147, and Asp150 together coordinate ATP.

The protein belongs to the UMP kinase family. In terms of assembly, homohexamer.

It localises to the cytoplasm. It carries out the reaction UMP + ATP = UDP + ADP. It functions in the pathway pyrimidine metabolism; CTP biosynthesis via de novo pathway; UDP from UMP (UMPK route): step 1/1. Inhibited by UTP. In terms of biological role, catalyzes the reversible phosphorylation of UMP to UDP. The polypeptide is Uridylate kinase (Methanococcus aeolicus (strain ATCC BAA-1280 / DSM 17508 / OCM 812 / Nankai-3)).